Consider the following 446-residue polypeptide: Glutamine synthetase (446 aa).

Positions 18-103 (ENVRYLRLQF…LICDVYKTDG (86 aa)) constitute a GS beta-grasp domain. The region spanning 110–446 (PRANLKRVLK…WERDQYMKQY (337 aa)) is the GS catalytic domain. Mg(2+) contacts are provided by Glu134 and Glu136. Position 186 (Glu186) interacts with ATP. Mg(2+) contacts are provided by Glu191 and Glu198. Residues 242-243 (NG) and Gly243 each bind L-glutamate. His247 provides a ligand contact to Mg(2+). Ser251 provides a ligand contact to ATP. L-glutamate is bound by residues Arg300, Glu306, and Arg318. Positions 318 and 323 each coordinate ATP. Glu335 is a Mg(2+) binding site. Arg337 contacts L-glutamate.

It belongs to the glutamine synthetase family. As to quaternary structure, oligomer of 12 subunits arranged in the form of two hexagons. In its feedback-inhibited form, interacts with TnrA in order to block its DNA-binding activity. Mg(2+) serves as cofactor.

The protein resides in the cytoplasm. The enzyme catalyses L-glutamate + NH4(+) + ATP = L-glutamine + ADP + phosphate + H(+). With respect to regulation, inhibited by glutamine. Its function is as follows. Glutamine synthetase (GS) is an unusual multitasking protein that functions as an enzyme, a transcription coregulator, and a chaperone in ammonium assimilation and in the regulation of genes involved in nitrogen metabolism. It catalyzes the ATP-dependent biosynthesis of glutamine from glutamate and ammonia. Feedback-inhibited GlnA also interacts with and regulates the activity of the transcriptional regulator TnrA. During nitrogen limitation, TnrA is in its DNA-binding active state and turns on the transcription of genes required for nitrogen assimilation. Under conditions of nitrogen excess, feedback-inhibited GlnA forms a stable complex with TnrA, which inhibits its DNA-binding activity. In contrast, feedback-inhibited GlnA acts as a chaperone to stabilize the DNA-binding activity of GlnR, which represses the transcription of nitrogen assimilation genes. The chain is Glutamine synthetase from Staphylococcus aureus (strain MRSA252).